The following is a 208-amino-acid chain: Uracil phosphoribosyltransferase (208 aa).

5-phospho-alpha-D-ribose 1-diphosphate is bound by residues Arg78, Arg103, and 130–138; that span reads DPMLATGGS. Uracil contacts are provided by residues Ile193 and 198 to 200; that span reads GDA. Residue Asp199 participates in 5-phospho-alpha-D-ribose 1-diphosphate binding.

This sequence belongs to the UPRTase family. The cofactor is Mg(2+).

It carries out the reaction UMP + diphosphate = 5-phospho-alpha-D-ribose 1-diphosphate + uracil. The protein operates within pyrimidine metabolism; UMP biosynthesis via salvage pathway; UMP from uracil: step 1/1. Allosterically activated by GTP. Catalyzes the conversion of uracil and 5-phospho-alpha-D-ribose 1-diphosphate (PRPP) to UMP and diphosphate. The sequence is that of Uracil phosphoribosyltransferase from Neisseria meningitidis serogroup A / serotype 4A (strain DSM 15465 / Z2491).